The primary structure comprises 70 residues: uncharacterized protein (70 aa).

2 consecutive transmembrane segments (helical) span residues 13-33 (YYAF…LLGF) and 39-59 (QTYA…GLII).

Its subcellular location is the cell membrane. This is an uncharacterized protein from Escherichia coli O6:H1 (strain CFT073 / ATCC 700928 / UPEC).